The sequence spans 589 residues: NADPH-dependent diflavin oxidoreductase 1 (589 aa).

The 147-residue stretch at 5 to 151 (ITILYGSETG…YYIEWEAELI (147 aa)) folds into the Flavodoxin-like domain. FMN contacts are provided by residues 11 to 16 (SETGNA), 60 to 63 (STTG), 98 to 107 (VGDSSYVKYN), and glutamate 133. Residues 202–439 (DGLKLGTVLE…SIQRSSFKYK (238 aa)) enclose the FAD-binding FR-type domain. FAD is bound by residues arginine 349, 380–383 (RMFS), and 412–415 (GVCT). Residues threonine 452 and 507–508 (SR) contribute to the NADP(+) site. Residue tryptophan 589 coordinates FAD.

Belongs to the NADPH-dependent diflavin oxidoreductase NDOR1 family. It in the N-terminal section; belongs to the flavodoxin family. This sequence in the C-terminal section; belongs to the flavoprotein pyridine nucleotide cytochrome reductase family. As to quaternary structure, interacts with DRE2; as part of the cytosolic iron-sulfur (Fe-S) protein assembly (CIA) machinery. It depends on FAD as a cofactor. Requires FMN as cofactor.

The protein resides in the cytoplasm. Its subcellular location is the mitochondrion. It catalyses the reaction 2 oxidized [2Fe-2S]-[protein] + NADPH = 2 reduced [2Fe-2S]-[protein] + NADP(+) + H(+). In terms of biological role, NADPH-dependent reductase which is a central component of the cytosolic iron-sulfur (Fe-S) protein assembly (CIA) machinery. Transfers electrons from NADPH via its FAD and FMN prosthetic groups to the [2Fe-2S] cluster of DRE2, another key component of the CIA machinery. In turn, this reduced cluster provides electrons for assembly of cytosolic iron-sulfur cluster proteins. Positively controls H(2)O(2)-induced cell death. The sequence is that of NADPH-dependent diflavin oxidoreductase 1 from Candida albicans (strain SC5314 / ATCC MYA-2876) (Yeast).